The chain runs to 155 residues: S-ribosylhomocysteine lyase (155 aa).

3 residues coordinate Fe cation: His53, His57, and Cys121.

The protein belongs to the LuxS family. As to quaternary structure, homodimer. Requires Fe cation as cofactor.

It carries out the reaction S-(5-deoxy-D-ribos-5-yl)-L-homocysteine = (S)-4,5-dihydroxypentane-2,3-dione + L-homocysteine. Its function is as follows. Involved in the synthesis of autoinducer 2 (AI-2) which is secreted by bacteria and is used to communicate both the cell density and the metabolic potential of the environment. The regulation of gene expression in response to changes in cell density is called quorum sensing. Catalyzes the transformation of S-ribosylhomocysteine (RHC) to homocysteine (HC) and 4,5-dihydroxy-2,3-pentadione (DPD). The sequence is that of S-ribosylhomocysteine lyase from Thermus thermophilus (strain ATCC BAA-163 / DSM 7039 / HB27).